The sequence spans 133 residues: Fatty acid-binding protein homolog 1 (133 aa).

At methionine 1 the chain carries N-acetylmethionine. Hexadecanoate-binding positions include arginine 107 and 127–129 (RTY).

This sequence belongs to the calycin superfamily. Fatty-acid binding protein (FABP) family.

In terms of biological role, has been implicated in the acquisition, storage, and transport of lipids, and may be important to the organism since it is incapable of synthesizing most of its lipids de novo. The sequence is that of Fatty acid-binding protein homolog 1 (FABP1) from Echinococcus granulosus (Hydatid tapeworm).